Consider the following 492-residue polypeptide: Catalase-3 (492 aa).

Catalysis depends on residues H65 and N138. Residue Y348 coordinates heme.

This sequence belongs to the catalase family. As to quaternary structure, homotetramer and heterotetramer. At least six or seven isozymes are produced from a mixture of 3 gene products. Interacts with NCA1. Interacts with LSD1. Requires heme as cofactor.

The protein localises to the peroxisome. It carries out the reaction 2 H2O2 = O2 + 2 H2O. Occurs in almost all aerobically respiring organisms and serves to protect cells from the toxic effects of hydrogen peroxide. This chain is Catalase-3 (CAT3), found in Arabidopsis thaliana (Mouse-ear cress).